A 1028-amino-acid chain; its full sequence is Contactin-3 (1028 aa).

The first 19 residues, 1–19 (MMLSWKQLILLSFIGCLAG), serve as a signal peptide directing secretion. 6 Ig-like C2-type domains span residues 26–117 (PVFV…AKLQ), 122–208 (ENFK…ARVL), 227–313 (PKIE…GRLT), 318–402 (PYWV…AELK), 408–497 (PDFS…LVVT), and 499–593 (PTRI…AELI). 5 disulfides stabilise this stretch: cysteine 50–cysteine 100, cysteine 144–cysteine 196, cysteine 249–cysteine 297, cysteine 339–cysteine 386, and cysteine 431–cysteine 479. N-linked (GlcNAc...) asparagine glycans are attached at residues asparagine 65 and asparagine 193. Residues asparagine 377, asparagine 468, asparagine 489, and asparagine 538 are each glycosylated (N-linked (GlcNAc...) asparagine). Cysteine 521 and cysteine 577 are joined by a disulfide. Fibronectin type-III domains are found at residues 600–698 (PPEN…TEEA), 703–800 (APSE…SAEE), 805–901 (APSH…TKKT), and 902–998 (PPSQ…TSMD). The interval 684 to 714 (GEPSLPSEKVRTEEAAPEVAPSEVSGGGGSR) is disordered. N-linked (GlcNAc...) asparagine glycans are attached at residues asparagine 765, asparagine 860, asparagine 895, asparagine 913, asparagine 931, and asparagine 956. Serine 1002 is lipidated: GPI-anchor amidated serine. The propeptide at 1003–1028 (TSAISDIHPVSGYISVLLFFIVNALW) is removed in mature form.

This sequence belongs to the immunoglobulin superfamily. Contactin family. Interacts with PTPRG. Specifically expressed in brain. Not expressed in peripheral tissues such as heart, lung, liver, spleen, kidney and skeletal muscle. In brain, it is restricted to subsets of neurons such as Purkinje cells of the cerebellum, granule cells of the dentate gyrus, and neurons in the superficial layers of the cerebral cortex.

It is found in the cell membrane. Contactins mediate cell surface interactions during nervous system development. Has some neurite outgrowth-promoting activity. This is Contactin-3 (Cntn3) from Rattus norvegicus (Rat).